A 487-amino-acid chain; its full sequence is Lysine--tRNA ligase (487 aa).

The Mg(2+) site is built by E398 and E405.

It belongs to the class-II aminoacyl-tRNA synthetase family. As to quaternary structure, homodimer. Mg(2+) serves as cofactor.

Its subcellular location is the cytoplasm. The enzyme catalyses tRNA(Lys) + L-lysine + ATP = L-lysyl-tRNA(Lys) + AMP + diphosphate. This chain is Lysine--tRNA ligase, found in Mycoplasma mobile (strain ATCC 43663 / 163K / NCTC 11711) (Mesomycoplasma mobile).